A 166-amino-acid polypeptide reads, in one-letter code: Large ribosomal subunit protein bL9 (166 aa).

Belongs to the bacterial ribosomal protein bL9 family.

In terms of biological role, binds to the 23S rRNA. This is Large ribosomal subunit protein bL9 from Borrelia garinii subsp. bavariensis (strain ATCC BAA-2496 / DSM 23469 / PBi) (Borreliella bavariensis).